Here is a 443-residue protein sequence, read N- to C-terminus: MMEESGIETTPPGTPPPHSAGLAAVPSTEAHLAVTSSFSSPNTSGMETVPPHSHSTPQPSLPPVQPSAPPPFVPLSPAPSTPLSGTSVPPSVSPSPATAFSGPPLSHFPPATSASGALLSAPPSGPPISGFSVGTTYDITRGHAGRAPQTPLMPSFSAPPVTGILPAPITQQASMTSLAQGPGTTSAITFPEEQEDPRISRGQDDAPAGGIWGFIKGVAGNPMVKSVLDKTKHSVESMITTLDPGMAPYIKSGGELDIVVTSNKEVKVAAVRDAFQEVFGLAVVVGEAGQSNIAPQPVGYAAGLKGAQERIDSLRRSGTIHEKQTAVSVENFIAELLPDKWFDIGCLVVEDPVHGIRLEAFTQATPVPLEFVQQAQSLTPQDYNLRWSGLLVTVGEVLEKSLLNVTRTDWHLAFTGMSRRQMIYSAAKALAGMYKQRLPPRPL.

Disordered regions lie at residues 1–108 and 139–206; these read MMEE…LSHF and ITRG…QDDA. A compositionally biased stretch (polar residues) spans 34 to 46; sequence VTSSFSSPNTSGM. Residues 59–80 show a composition bias toward pro residues; sequence PSLPPVQPSAPPPFVPLSPAPS. Over residues 81–96 the composition is skewed to low complexity; sequence TPLSGTSVPPSVSPSP. The span at 169–188 shows a compositional bias: polar residues; that stretch reads ITQQASMTSLAQGPGTTSAI.

The protein belongs to the PRRC1 family. As to quaternary structure, interacts with PRKAR1A; resulting in PKA activation.

The protein localises to the golgi apparatus. The protein resides in the cytoplasm. Its function is as follows. May act as a regulator of the protein kinase A (PKA) during embryonic development. This Rattus norvegicus (Rat) protein is Protein PRRC1 (Prrc1).